A 63-amino-acid polypeptide reads, in one-letter code: MPIAQIHILEGRNDEQKETLIREVSEAISRSLDAPLTSVRVIITEMAKGHFGIGGELASKVRR.

P2 functions as the Proton acceptor; via imino nitrogen in the catalytic mechanism.

This sequence belongs to the 4-oxalocrotonate tautomerase family. In terms of assembly, homohexamer.

The enzyme catalyses (2Z,4E)-2-hydroxyhexa-2,4-dienedioate = (3E)-2-oxohex-3-enedioate. Its pathway is xenobiotic degradation; toluene degradation. It participates in xenobiotic degradation; xylene degradation. Its function is as follows. Catalyzes the ketonization of 2-hydroxymuconate stereoselectively to yield 2-oxo-3-hexenedioate. This Pseudomonas putida (Arthrobacter siderocapsulatus) protein is 2-hydroxymuconate tautomerase (xylH).